The primary structure comprises 637 residues: Chaperone protein dnaK2 (637 aa).

A Phosphothreonine; by autocatalysis modification is found at Thr-197. A disordered region spans residues 602 to 637; that stretch reads AAAGGAAPGGDAGASAASGGGDASDDVIDAEFTETK. The segment covering 603–623 has biased composition (gly residues); the sequence is AAGGAAPGGDAGASAASGGGD. The span at 624–637 shows a compositional bias: acidic residues; sequence ASDDVIDAEFTETK.

The protein belongs to the heat shock protein 70 family.

Functionally, acts as a chaperone. In Parasynechococcus marenigrum (strain WH8102), this protein is Chaperone protein dnaK2 (dnaK2).